The primary structure comprises 124 residues: Small ribosomal subunit protein uS12 (124 aa).

Asp89 is subject to 3-methylthioaspartic acid.

Belongs to the universal ribosomal protein uS12 family. In terms of assembly, part of the 30S ribosomal subunit. Contacts proteins S8 and S17. May interact with IF1 in the 30S initiation complex.

With S4 and S5 plays an important role in translational accuracy. Its function is as follows. Interacts with and stabilizes bases of the 16S rRNA that are involved in tRNA selection in the A site and with the mRNA backbone. Located at the interface of the 30S and 50S subunits, it traverses the body of the 30S subunit contacting proteins on the other side and probably holding the rRNA structure together. The combined cluster of proteins S8, S12 and S17 appears to hold together the shoulder and platform of the 30S subunit. The protein is Small ribosomal subunit protein uS12 of Shewanella baltica (strain OS223).